The chain runs to 61 residues: Temporin-MT3 (61 aa).

Residues M1–C22 form the signal peptide. Residues E23 to E44 constitute a propeptide, removed in mature form. Leucine amide is present on L59.

The protein belongs to the frog skin active peptide (FSAP) family. Temporin subfamily. As to expression, expressed by the skin glands.

It is found in the secreted. In terms of biological role, antimicrobial peptide. The sequence is that of Temporin-MT3 from Amolops mantzorum (Sichuan torrent frog).